The primary structure comprises 474 residues: Light-independent protochlorophyllide reductase subunit N (474 aa).

[4Fe-4S] cluster contacts are provided by C22, C47, and C107.

Belongs to the BchN/ChlN family. Protochlorophyllide reductase is composed of three subunits; ChlL, ChlN and ChlB. Forms a heterotetramer of two ChlB and two ChlN subunits. The cofactor is [4Fe-4S] cluster.

It is found in the plastid. The protein resides in the chloroplast. It carries out the reaction chlorophyllide a + oxidized 2[4Fe-4S]-[ferredoxin] + 2 ADP + 2 phosphate = protochlorophyllide a + reduced 2[4Fe-4S]-[ferredoxin] + 2 ATP + 2 H2O. It participates in porphyrin-containing compound metabolism; chlorophyll biosynthesis (light-independent). In terms of biological role, component of the dark-operative protochlorophyllide reductase (DPOR) that uses Mg-ATP and reduced ferredoxin to reduce ring D of protochlorophyllide (Pchlide) to form chlorophyllide a (Chlide). This reaction is light-independent. The NB-protein (ChlN-ChlB) is the catalytic component of the complex. This Physcomitrium patens (Spreading-leaved earth moss) protein is Light-independent protochlorophyllide reductase subunit N.